Reading from the N-terminus, the 303-residue chain is Bifunctional protein FolD 2 (303 aa).

NADP(+)-binding positions include 169–171 (GRS), Ser-194, and Ile-235.

This sequence belongs to the tetrahydrofolate dehydrogenase/cyclohydrolase family. As to quaternary structure, homodimer.

The catalysed reaction is (6R)-5,10-methylene-5,6,7,8-tetrahydrofolate + NADP(+) = (6R)-5,10-methenyltetrahydrofolate + NADPH. It catalyses the reaction (6R)-5,10-methenyltetrahydrofolate + H2O = (6R)-10-formyltetrahydrofolate + H(+). It functions in the pathway one-carbon metabolism; tetrahydrofolate interconversion. In terms of biological role, catalyzes the oxidation of 5,10-methylenetetrahydrofolate to 5,10-methenyltetrahydrofolate and then the hydrolysis of 5,10-methenyltetrahydrofolate to 10-formyltetrahydrofolate. The protein is Bifunctional protein FolD 2 of Ectopseudomonas mendocina (strain ymp) (Pseudomonas mendocina).